The sequence spans 609 residues: MPNYIFWPYESLFENSAAQGPQVALAISFEKTHFVVLGVCEPQYLEEVSIRPPYSVVATKNNGAEGWNYKVADPCNVHFRIPKLKFMQFYSSDPISLIIPEKEVGLHSSVGETLNYSKLEQHPRYKRDNKKLSETLNIINLFPAYCKALNELYPFIQTSQENLRGTMLNSVAAWCSSTCIYKMVAKIGFYLTFVICSIASLVSSLLNYSHFQLVNYSAFVQQIDLRCQQICYFPVQYERINKKDNIQNVGSMVEKDNSNSQFSHSYMPSKFYPDYILLYNTIWLIINDISFGLILGAILIENRDFLVSASHRVLKFFLYDSLKTITETLANNPLGIKLNAELANFLSELFLWVIEFSYTTFIKRLIDPKTLSSLLTLTIYMMFLVGFSFAVSLAIDFFAILSFPIYVFYRISSKLYHCQLNIMASLFNLFCGKKRNVLRNRIDHNYFQLDQLLLGTLLFIILVFLTPTVMAFYMSYTVLRMLTITIEIFSEAVIALINHFPLFALLLRLKDPKRLPGGISIELKTTVSNKHTTLELQNNPIKFKSMFRPYNLLLSQMRTNYFSFATVRKIVRGESIMVNRNKLYYVLYSSLPSKPLSVKDLYKRLTIQA.

Residues 1-186 (MPNYIFWPYE…STCIYKMVAK (186 aa)) are Extracellular-facing. Residues 187 to 207 (IGFYLTFVICSIASLVSSLLN) traverse the membrane as a helical segment. Topologically, residues 208–280 (YSHFQLVNYS…FYPDYILLYN (73 aa)) are cytoplasmic. The helical transmembrane segment at 281 to 301 (TIWLIINDISFGLILGAILIE) threads the bilayer. Topologically, residues 302 to 380 (NRDFLVSASH…LSSLLTLTIY (79 aa)) are extracellular. A helical membrane pass occupies residues 381–401 (MMFLVGFSFAVSLAIDFFAIL). The Cytoplasmic portion of the chain corresponds to 402–451 (SFPIYVFYRISSKLYHCQLNIMASLFNLFCGKKRNVLRNRIDHNYFQLDQ). The chain crosses the membrane as a helical span at residues 452–472 (LLLGTLLFIILVFLTPTVMAF). Over 473 to 485 (YMSYTVLRMLTIT) the chain is Extracellular. Residues 486 to 506 (IEIFSEAVIALINHFPLFALL) form a helical membrane-spanning segment. Residues 507–609 (LRLKDPKRLP…DLYKRLTIQA (103 aa)) lie on the Cytoplasmic side of the membrane.

Belongs to the PIGQ family. Component of the phosphatidylinositol N-acetylglucosaminyltransferase (GPI-GlcNAc transferase) complex composed of at least GPI1, GPI2, GPI3, GPI15, GPI19 and ERI1.

It is found in the membrane. It carries out the reaction a 1,2-diacyl-sn-glycero-3-phospho-(1D-myo-inositol) + UDP-N-acetyl-alpha-D-glucosamine = a 6-(N-acetyl-alpha-D-glucosaminyl)-1-(1,2-diacyl-sn-glycero-3-phospho)-1D-myo-inositol + UDP + H(+). Its pathway is glycolipid biosynthesis; glycosylphosphatidylinositol-anchor biosynthesis. Functionally, part of the complex catalyzing the transfer of N-acetylglucosamine from UDP-N-acetylglucosamine to phosphatidylinositol, the first step of GPI biosynthesis. The protein is Phosphatidylinositol N-acetylglucosaminyltransferase subunit GPI1 (GPI1) of Saccharomyces cerevisiae (strain ATCC 204508 / S288c) (Baker's yeast).